We begin with the raw amino-acid sequence, 275 residues long: 2,3,4,5-tetrahydropyridine-2,6-dicarboxylate N-succinyltransferase (275 aa).

Arginine 105 and aspartate 142 together coordinate substrate.

This sequence belongs to the transferase hexapeptide repeat family. Homotrimer.

The protein localises to the cytoplasm. The enzyme catalyses (S)-2,3,4,5-tetrahydrodipicolinate + succinyl-CoA + H2O = (S)-2-succinylamino-6-oxoheptanedioate + CoA. The protein operates within amino-acid biosynthesis; L-lysine biosynthesis via DAP pathway; LL-2,6-diaminopimelate from (S)-tetrahydrodipicolinate (succinylase route): step 1/3. The protein is 2,3,4,5-tetrahydropyridine-2,6-dicarboxylate N-succinyltransferase of Histophilus somni (strain 129Pt) (Haemophilus somnus).